A 533-amino-acid polypeptide reads, in one-letter code: UDP-glucuronosyltransferase 1-2 (533 aa).

Positions 1-27 (MDTGLCVPLRGISGLLLLLCALPWAEG) are cleaved as a signal peptide. Asn-141, Asn-295, and Asn-433 each carry an N-linked (GlcNAc...) asparagine glycan. A helical membrane pass occupies residues 491–511 (VIGFLLAIVLTVVFIVFKCCA).

It belongs to the UDP-glycosyltransferase family. As to expression, expressed in kidney.

The protein localises to the microsome. It localises to the endoplasmic reticulum membrane. It carries out the reaction glucuronate acceptor + UDP-alpha-D-glucuronate = acceptor beta-D-glucuronoside + UDP + H(+). Functionally, UDPGT is of major importance in the conjugation and subsequent elimination of potentially toxic xenobiotics and endogenous compounds. The chain is UDP-glucuronosyltransferase 1-2 (Ugt1a2) from Mus musculus (Mouse).